The primary structure comprises 283 residues: N-terminal Xaa-Pro-Lys N-methyltransferase 2 (283 aa).

S-adenosyl-L-methionine is bound by residues Gly-124, Arg-129, Asp-146, 174 to 175, and Gln-190; that span reads LQ.

It belongs to the methyltransferase superfamily. NTM1 family.

The protein resides in the nucleus. It catalyses the reaction N-terminal L-alanyl-L-prolyl-L-lysyl-[protein] + S-adenosyl-L-methionine = N-terminal N-methyl-L-alanyl-L-prolyl-L-lysyl-[protein] + S-adenosyl-L-homocysteine + H(+). The catalysed reaction is N-terminal L-prolyl-L-prolyl-L-lysyl-[protein] + S-adenosyl-L-methionine = N-terminal N-methyl-L-prolyl-L-prolyl-L-lysyl-[protein] + S-adenosyl-L-homocysteine + H(+). The enzyme catalyses N-terminal L-seryl-L-prolyl-L-lysyl-[protein] + S-adenosyl-L-methionine = N-terminal N-methyl-L-seryl-L-prolyl-L-lysyl-[protein] + S-adenosyl-L-homocysteine + H(+). Functionally, alpha N-methyltransferase that methylates the N-terminus of target proteins containing the N-terminal motif [Ala/Pro/Ser]-Pro-Lys when the initiator Met is cleaved. Specifically catalyzes monomethylation of exposed alpha-amino group of Ala or Ser residue in the [Ala/Ser]-Pro-Lys motif and Pro in the Pro-Pro-Lys motif. Predominantly functions as a mono-methyltransferase but is also able to di-/tri-methylate the GPKRIA peptide and di-methylate the PPKRIA peptide (in vitro). May activate NTMT1 by priming its substrates for trimethylation. This chain is N-terminal Xaa-Pro-Lys N-methyltransferase 2 (Ntmt2), found in Rattus norvegicus (Rat).